The chain runs to 156 residues: MPRKGPVPKREVLPDPIYSSRLITKFVNRLMYDGKKGAAEKIFYSSLEHLAEKTGEEPMRAFEKALDNVKPHMEVKARRVGGATYQVPMEVRPERQVSLSIRWLINYARSRGEKGMTAKLSAELLDAFNGRGGAVKKREDTHRMADANKAFSHYRW.

This sequence belongs to the universal ribosomal protein uS7 family. In terms of assembly, part of the 30S ribosomal subunit. Contacts proteins S9 and S11.

Functionally, one of the primary rRNA binding proteins, it binds directly to 16S rRNA where it nucleates assembly of the head domain of the 30S subunit. Is located at the subunit interface close to the decoding center, probably blocks exit of the E-site tRNA. The polypeptide is Small ribosomal subunit protein uS7 (Desulfovibrio desulfuricans (strain ATCC 27774 / DSM 6949 / MB)).